The chain runs to 241 residues: Small ribosomal subunit protein uS2 (241 aa).

Belongs to the universal ribosomal protein uS2 family.

The polypeptide is Small ribosomal subunit protein uS2 (Klebsiella pneumoniae subsp. pneumoniae (strain ATCC 700721 / MGH 78578)).